A 725-amino-acid chain; its full sequence is Beta-adducin (725 aa).

The segment at 1–22 (MSEDTVPEAASPPPSQGQHYFD) is disordered. Residues Ser11 and Ser25 each carry the phosphoserine modification. At Thr55 the chain carries Phosphothreonine. Residues Ser60 and Ser344 each carry the phosphoserine modification. Residues 425 to 444 (KQQKEKTRWLNTPNTYLRVN) are interaction with calmodulin. The interval 525 to 725 (AEKSRSPSTE…KSKKKEKVES (201 aa)) is disordered. A phosphoserine mark is found at Ser530 and Ser532. A Phosphothreonine modification is found at Thr533. Ser535 is modified (phosphoserine). Residue Thr561 is modified to Phosphothreonine. The segment covering 566 to 588 (EEYKKEVERKKLEQEQEGEKDAA) has biased composition (basic and acidic residues). Phosphoserine is present on residues Ser594, Ser598, Ser602, and Ser606. Residues 596 to 621 (VKSTPASPVQSPTRAGTKSPAVSPSK) are compositionally biased toward polar residues. The residue at position 612 (Thr612) is a Phosphothreonine. 3 positions are modified to phosphoserine: Ser614, Ser618, and Ser620. Composition is skewed to basic and acidic residues over residues 622–631 (ASEDAKKTEV) and 639–654 (EPEKPEGVVVNGKEEE). The residue at position 674 (Thr674) is a Phosphothreonine. Residues Ser678, Ser685, Ser688, Ser692, Ser696, Ser698, Ser700, Ser702, and Ser712 each carry the phosphoserine modification. The span at 687–700 (TSGPLSPEGSPSKS) shows a compositional bias: low complexity. Residues 701–725 (PSKKKKKFRTPSFLKKSKKKEKVES) are compositionally biased toward basic residues. The interval 703–720 (KKKKKFRTPSFLKKSKKK) is interaction with calmodulin.

This sequence belongs to the aldolase class II family. Adducin subfamily. Heterodimer of an alpha and a beta subunit. Found in a complex with ADD2, DMTN and SLC2A1. Interacts with SLC2A1. In terms of tissue distribution, found in liver, kidney, spleen, heart and brain.

Its subcellular location is the cytoplasm. It localises to the cytoskeleton. The protein localises to the cell membrane. Its function is as follows. Membrane-cytoskeleton-associated protein that promotes the assembly of the spectrin-actin network. Binds to the erythrocyte membrane receptor SLC2A1/GLUT1 and may therefore provide a link between the spectrin cytoskeleton to the plasma membrane. Binds to calmodulin. Calmodulin binds preferentially to the beta subunit. This Rattus norvegicus (Rat) protein is Beta-adducin (Add2).